The chain runs to 272 residues: Lectin-like protein At1g53070 (272 aa).

Positions Met1–Ala23 are cleaved as a signal peptide. The legume-lectin like stretch occupies residues Tyr24 to Gln271. N-linked (GlcNAc...) asparagine glycans are attached at residues Asn33, Asn84, and Asn134. Position 241 is a phosphoserine (Ser241).

The protein belongs to the leguminous lectin family.

Its subcellular location is the secreted. It is found in the extracellular space. The protein localises to the apoplast. The polypeptide is Lectin-like protein At1g53070 (Arabidopsis thaliana (Mouse-ear cress)).